The chain runs to 332 residues: MANIYYDEDASLDYLKDKTVAIIGYGSQGHAHALNLRDSGIKVIIGLLAGSRSIEKAKAEGFEVYSPDEAAKKADVIMILTPDTVQPALYQSAILPNLDEGNALAFAHGFNIHFGQIVPPSYVDVFLVAPKGPGHLVRWMYEEGKGVPGLFAVYQDFTGKAREIAMAYAKGIGATRAGLIETTFKEETETDLFGEQAVLCGGATALIKAGFETLIEAGYQPEVAYFECLHELKLIVDLIYQYGISGMRYSISDTARYGDVTRGKRVYEAVKPLYKKILEEIQEGEFAKEWILENVANRPHFNALVKKDEEHPVEKVGKELRKMMPWLGGRGL.

In terms of domain architecture, KARI N-terminal Rossmann spans 2–182; that stretch reads ANIYYDEDAS…GATRAGLIET (181 aa). NADP(+) contacts are provided by residues 25-28, serine 51, serine 53, and 83-86; these read YGSQ and DTVQ. Histidine 108 is a catalytic residue. Glycine 134 contributes to the NADP(+) binding site. A KARI C-terminal knotted domain is found at 183–327; it reads TFKEETETDL…KELRKMMPWL (145 aa). Mg(2+)-binding residues include aspartate 191, glutamate 195, glutamate 227, and glutamate 231. Residue serine 252 participates in substrate binding.

This sequence belongs to the ketol-acid reductoisomerase family. Mg(2+) serves as cofactor.

It carries out the reaction (2R)-2,3-dihydroxy-3-methylbutanoate + NADP(+) = (2S)-2-acetolactate + NADPH + H(+). The catalysed reaction is (2R,3R)-2,3-dihydroxy-3-methylpentanoate + NADP(+) = (S)-2-ethyl-2-hydroxy-3-oxobutanoate + NADPH + H(+). It functions in the pathway amino-acid biosynthesis; L-isoleucine biosynthesis; L-isoleucine from 2-oxobutanoate: step 2/4. It participates in amino-acid biosynthesis; L-valine biosynthesis; L-valine from pyruvate: step 2/4. Involved in the biosynthesis of branched-chain amino acids (BCAA). Catalyzes an alkyl-migration followed by a ketol-acid reduction of (S)-2-acetolactate (S2AL) to yield (R)-2,3-dihydroxy-isovalerate. In the isomerase reaction, S2AL is rearranged via a Mg-dependent methyl migration to produce 3-hydroxy-3-methyl-2-ketobutyrate (HMKB). In the reductase reaction, this 2-ketoacid undergoes a metal-dependent reduction by NADPH to yield (R)-2,3-dihydroxy-isovalerate. In Sulfurihydrogenibium sp. (strain YO3AOP1), this protein is Ketol-acid reductoisomerase (NADP(+)).